The primary structure comprises 296 residues: Light-independent protochlorophyllide reductase iron-sulfur ATP-binding protein (296 aa).

The tract at residues 1-20 is disordered; it reads MTTTLSRPTDGEGSVQVQQD. ATP-binding positions include 39-44 and Lys68; that span reads GIGKST. Ser43 is a binding site for Mg(2+). Residues Cys124 and Cys158 each contribute to the [4Fe-4S] cluster site. An ATP-binding site is contributed by 209 to 210; the sequence is NR.

This sequence belongs to the NifH/BchL/ChlL family. In terms of assembly, homodimer. Protochlorophyllide reductase is composed of three subunits; ChlL, ChlN and ChlB. [4Fe-4S] cluster is required as a cofactor.

It carries out the reaction chlorophyllide a + oxidized 2[4Fe-4S]-[ferredoxin] + 2 ADP + 2 phosphate = protochlorophyllide a + reduced 2[4Fe-4S]-[ferredoxin] + 2 ATP + 2 H2O. It functions in the pathway porphyrin-containing compound metabolism; chlorophyll biosynthesis (light-independent). Its function is as follows. Component of the dark-operative protochlorophyllide reductase (DPOR) that uses Mg-ATP and reduced ferredoxin to reduce ring D of protochlorophyllide (Pchlide) to form chlorophyllide a (Chlide). This reaction is light-independent. The L component serves as a unique electron donor to the NB-component of the complex, and binds Mg-ATP. The sequence is that of Light-independent protochlorophyllide reductase iron-sulfur ATP-binding protein from Synechococcus sp. (strain CC9902).